A 236-amino-acid chain; its full sequence is 2,3,4,5-tetrahydropyridine-2,6-dicarboxylate N-acetyltransferase (236 aa).

Belongs to the transferase hexapeptide repeat family. DapH subfamily.

It carries out the reaction (S)-2,3,4,5-tetrahydrodipicolinate + acetyl-CoA + H2O = L-2-acetamido-6-oxoheptanedioate + CoA. It functions in the pathway amino-acid biosynthesis; L-lysine biosynthesis via DAP pathway; LL-2,6-diaminopimelate from (S)-tetrahydrodipicolinate (acetylase route): step 1/3. Its function is as follows. Catalyzes the transfer of an acetyl group from acetyl-CoA to tetrahydrodipicolinate. The protein is 2,3,4,5-tetrahydropyridine-2,6-dicarboxylate N-acetyltransferase of Bacillus licheniformis (strain ATCC 14580 / DSM 13 / JCM 2505 / CCUG 7422 / NBRC 12200 / NCIMB 9375 / NCTC 10341 / NRRL NRS-1264 / Gibson 46).